A 969-amino-acid chain; its full sequence is RNA polymerase-associated protein RapA (969 aa).

A Helicase ATP-binding domain is found at 164 to 334 (EVGRRHAPRV…FARLRLLDPD (171 aa)). Residue 177–184 (DEVGLGKT) coordinates ATP. The short motif at 280–283 (DEAH) is the DEAH box element. The Helicase C-terminal domain occupies 492 to 686 (RVNWLLEKVK…ELKSQLEQGR (195 aa)).

It belongs to the SNF2/RAD54 helicase family. RapA subfamily. In terms of assembly, interacts with the RNAP. Has a higher affinity for the core RNAP than for the holoenzyme. Its ATPase activity is stimulated by binding to RNAP.

Transcription regulator that activates transcription by stimulating RNA polymerase (RNAP) recycling in case of stress conditions such as supercoiled DNA or high salt concentrations. Probably acts by releasing the RNAP, when it is trapped or immobilized on tightly supercoiled DNA. Does not activate transcription on linear DNA. Probably not involved in DNA repair. The polypeptide is RNA polymerase-associated protein RapA (Vibrio parahaemolyticus serotype O3:K6 (strain RIMD 2210633)).